Here is a 553-residue protein sequence, read N- to C-terminus: Hydroxylamine reductase (553 aa).

Cysteine 3, cysteine 6, cysteine 18, and cysteine 25 together coordinate [2Fe-2S] cluster. Histidine 249, glutamate 273, cysteine 317, cysteine 405, cysteine 433, cysteine 459, glutamate 493, and lysine 495 together coordinate hybrid [4Fe-2O-2S] cluster. Cysteine 405 bears the Cysteine persulfide mark.

The protein belongs to the HCP family. It depends on [2Fe-2S] cluster as a cofactor. Hybrid [4Fe-2O-2S] cluster serves as cofactor.

The protein localises to the cytoplasm. It carries out the reaction A + NH4(+) + H2O = hydroxylamine + AH2 + H(+). In terms of biological role, catalyzes the reduction of hydroxylamine to form NH(3) and H(2)O. The chain is Hydroxylamine reductase from Mannheimia succiniciproducens (strain KCTC 0769BP / MBEL55E).